Here is a 437-residue protein sequence, read N- to C-terminus: O-acetyl-L-homoserine sulfhydrylase (437 aa).

Lysine 216 bears the N6-(pyridoxal phosphate)lysine mark.

The protein belongs to the trans-sulfuration enzymes family. In terms of assembly, homohexamer. Pyridoxal 5'-phosphate is required as a cofactor.

It carries out the reaction O-acetyl-L-homoserine + hydrogen sulfide = L-homocysteine + acetate. The catalysed reaction is O-acetyl-L-homoserine + methanethiol = L-methionine + acetate + H(+). It functions in the pathway amino-acid biosynthesis; L-methionine biosynthesis via de novo pathway; L-homocysteine from O-acetyl-L-homoserine: step 1/1. Its activity is regulated as follows. Inhibited by methionine and cystathionine. Catalyzes the conversion of O-acetyl-L-homoserine (OAH) into homocysteine in the methionine biosynthesis pathway. Can also use dimethyldisulfide and methanethiol as reduced sulfur sources, leading to the direct formation of methionine. Has weak cystathionine gamma-synthase activity. This chain is O-acetyl-L-homoserine sulfhydrylase, found in Corynebacterium glutamicum (strain ATCC 13032 / DSM 20300 / JCM 1318 / BCRC 11384 / CCUG 27702 / LMG 3730 / NBRC 12168 / NCIMB 10025 / NRRL B-2784 / 534).